A 1788-amino-acid chain; its full sequence is Genome polyprotein (1788 aa).

An interaction with host MAP1LC3A/LC3 region spans residues 1 to 184 (MMMASKDVVA…LCPLPPIDLR (184 aa)). Over residues 58–68 (GRTTPEPTGTA) the composition is skewed to low complexity. The segment at 58 to 86 (GRTTPEPTGTAGPPPKQQRDRPPRTQEEV) is disordered. A compositionally biased stretch (basic and acidic residues) spans 74-84 (QQRDRPPRTQE). Residues 185-399 (NMEPASEPTI…ASLLPDFHLQ (215 aa)) are interaction with NTPase. An interaction with NS4 region spans residues 302 to 399 (HPTQSWSQQT…ASLLPDFHLQ (98 aa)). 2 host ER membrane association regions span residues 319–350 (KLEL…KPLN) and 361–399 (TFMG…FHLQ). The interaction with NS1-2 and NS4 and homooligomerization stretch occupies residues 400-575 (GPEDLARDLV…GKTKAAEHLA (176 aa)). The 166-residue stretch at 533–698 (RISMARSALA…EQIRRVSPGD (166 aa)) folds into the SF3 helicase domain. 561–568 (GPPGIGKT) is a binding site for ATP. An important for mitochondrion targeting region spans residues 652–757 (AIVITTNAPG…AVALTMERQD (106 aa)). Residues 827-833 (YSLESDG) are functions as endoplasmic reticulum export signal. The host membrane association stretch occupies residues 866-911 (RAVAYASCIQSAITSILQIAGSALVVNRAVKRMFGTRTATLSLEGP). Residues 948–979 (EEVAHTEIPSATMEGKNKGKNKKGRGRRNNYN) are disordered. Positions 965-975 (KGKNKKGRGRR) are enriched in basic residues. An acidic region spans residues 988 to 993 (DEEYEE). At Tyr991 the chain carries O-(5'-phospho-RNA)-tyrosine. An interaction with host EIF4G region spans residues 1083 to 1099 (WADDEREVDYNEKISFE). One can recognise a Peptidase C37 domain in the interval 1100–1280 (APPTLWSRVT…QASEGETTLE (181 aa)). Residues His1129, Glu1153, and Cys1238 each act as for 3CLpro activity in the active site. In terms of domain architecture, RdRp catalytic spans 1515–1636 (KYHFDADYTA…STDIEFDPAK (122 aa)). Mg(2+)-binding residues include Asp1519, Asp1521, Asp1623, and Glu1624.

In terms of assembly, homodimer. Homooligomer. Interacts with NTPase; this interaction increases the proapoptotic activity of the NTPase and is crucial for the formation of the viral replication complex. Interacts with NS4; this interaction is crucial for the formation of the viral replication complex. Interacts (via N-terminus) with host VAPA. Interacts with host MAP1LC3A/LC3; this interaction does not seem to be linked to host autophagy, but rather plays a role in the formation of viral factories. Homooligomer. Interacts with NS1-2; this interaction increases the proapoptotic activity of the NTPase and is crucial for the formation of the viral replication complex. Interacts with NS4; this interaction increases the proapoptotic activity of the NTPase. As to quaternary structure, homodimer. Monomer; in solution. In terms of assembly, interacts with NTPase; this interaction increases the proapoptotic activity of the NTPase. Interacts with NS1-2; this interaction is crucial for the formation of the viral replication complex. Monomer. Interacts with the RNA-directed RNA polymerase; this interaction induces the multimerization of the RdRp and enhances its activity. Interacts with host IEF4G1; this interaction plays a role in translation of viral proteins. As to quaternary structure, homohexamer; also forms fibrous hexameric oligomer. Interacts with the viral genome-linked protein; this interaction induces the multimerization of the RdRp and enhances its activity. Requires Mg(2+) as cofactor. Mn(2+) serves as cofactor. Post-translationally, specific enzymatic cleavages in vivo yield mature proteins. 3CLpro is first autocatalytically cleaved, then processes the whole polyprotein. NS1/2-3 and NS3-4 sites are cleaved rapidly and NS4-5, NS5-6, and NS6-7 sites are processed subsequently and less efficiently. In terms of processing, VPg is uridylylated by the polymerase and is covalently attached to the 5'-end of the polyadenylated genomic and subgenomic RNAs. This uridylylated form acts as a nucleotide-peptide primer for the polymerase.

Its subcellular location is the host Golgi apparatus membrane. The protein resides in the host endoplasmic reticulum membrane. It carries out the reaction a ribonucleoside 5'-triphosphate + H2O = a ribonucleoside 5'-diphosphate + phosphate + H(+). The catalysed reaction is Endopeptidase with a preference for cleavage when the P1 position is occupied by Glu-|-Xaa and the P1' position is occupied by Gly-|-Yaa.. It catalyses the reaction RNA(n) + a ribonucleoside 5'-triphosphate = RNA(n+1) + diphosphate. Functionally, induces the proliferation of the host smooth ER membranes forming long tubular structures. These remodeled membranes probably form the viral factories that contain the replication complex. May play a role in viral replication by interacting with host VAPA, a vesicle-associated membrane protein that plays a role in SNARE-mediated vesicle fusion. This interaction may target replication complex to intracellular membranes. Displays NTPase activity, but no helicase activity. Induces the formation of convoluted membranes derived from the host ER. These remodeled membranes probably form the viral factories that contain the replication complex. Initiates host cell death by targeting the mitochondrial outer membrane, leading to the permeabilization of mitochondria, programmed host cell death and viral egress. Probably plays a role in preventing the assembly of host stress granules. In terms of biological role, probable key protein responsible for the formation of membrane alterations by the virus. Induces the formation of convoluted membranes derived from the host ER. These remodeled membranes probably form the viral factories that contain the replication complex. May play a role in targeting replication complex to intracellular membranes. Its function is as follows. Viral genome-linked protein is covalently linked to the 5'-end of the positive-strand, negative-strand genomic RNAs and subgenomic RNA. Acts as a genome-linked replication primer. May recruit ribosome to viral RNA thereby promoting viral proteins translation. Interacts with host translation initiation complex to allow the translation of viral proteins. Induces the formation of aggregates of RNA-directed RNA polymerase in the presence of RNA. Through its interaction with the viral RNA-directed RNA polymerase, plays a crucial role in enhancing the polymerase activity. Functionally, processes the polyprotein. 3CLpro-RdRp is first released by autocleavage, then all other proteins are cleaved. May cleave polyadenylate-binding protein thereby inhibiting cellular translation. Replicates genomic and antigenomic RNA by recognizing replications specific signals. Also transcribes a subgenomic mRNA by initiating RNA synthesis internally on antigenomic RNA. This sgRNA codes for structural proteins. Catalyzes the covalent attachment VPg with viral RNAs. The chain is Genome polyprotein from Southampton virus (strain GI/Human/United Kingdom/Southampton/1991) (SHV).